Consider the following 201-residue polypeptide: Zinc finger protein 239 (201 aa).

7 C2H2-type zinc fingers span residues 6–28, 34–56, 62–84, 90–112, 118–140, 146–168, and 174–196; these read YKCD…HSVH, FKCD…KRVH, YACE…QRVH, YKCG…RCTH, YQCY…LRVH, YHCG…QRVH, and YECS…QRVH.

The protein belongs to the krueppel C2H2-type zinc-finger protein family. Preferentially expressed in transformed mouse cells.

The protein resides in the nucleus. Its function is as follows. May be involved in transcriptional regulation. This chain is Zinc finger protein 239 (Znf239), found in Mus musculus (Mouse).